Consider the following 442-residue polypeptide: MRKKELFDFTNITPKLFTELRVADKTVLQSFNFDEKNHQIYTTQVASGLGKDNTQSYRITRLSLEGLQLDSMLLKHGGHGTNIGIENRNGTIYIWSLYDKPNETDKSELVCFPYKAGATLDENSKELQRFSNMPFDHRVTPALDMKNRQLAIRQYDTKNNNNKQWVTIFNLDDAIANKNNPLYTINIPDELHYLQGFFLDDGYLYWYTGDTNSKSYPNLITVFDSDNKIVLQKEITVGKDLSTRYENNFREPEGICMYTNPETGAKSLMVGITSGKEGNRISRIYAYHSYENFMNHVPMLRSPLLKTVGHQDTPPERFQPFIQTFILEYNAQNKKWMVPTSGYLPSYTSNLVRNITINADGNLQVTLNERYISLLHQSIEGDFRLKQKDIRMGSWYFAGGEKSNVLEIGFMKGSTKIRPDDAAISNASRMSIFMIVADKIEV.

Its function is as follows. Unknown. Might be involved in poly(glycerol phosphate) teichoic acid biosynthesis. This is Putative major teichoic acid biosynthesis protein C (tagC) from Bacillus subtilis (strain 168).